The sequence spans 775 residues: Glutamine--tRNA ligase (775 aa).

Alanine 2 is modified (N-acetylalanine). Position 70 is a phosphoserine (serine 70). The short motif at 270–280 (PEPNGILHIGH) is the 'HIGH' region element. Residues 271 to 273 (EPN) and 277 to 283 (HIGHAKA) each bind ATP. Aspartate 303 is a binding site for L-glutamine. Lysine 309 carries the N6-acetyllysine modification. Tyrosine 438 contacts L-glutamine. Residues threonine 457, 486–487 (RL), and 494–496 (VSK) contribute to the ATP site. A 'KMSKS' region motif is present at residues 493–497 (VVSKR). Residue serine 495 is modified to Phosphoserine.

The protein belongs to the class-I aminoacyl-tRNA synthetase family. In terms of assembly, monomer. Part of a multisubunit complex that groups tRNA ligases for Arg (RARS1), Asp (DARS1), Gln (QARS1), Ile (IARS1), Leu (LARS1), Lys (KARS1), Met (MARS1) the bifunctional ligase for Glu and Pro (EPRS1) and the auxiliary subunits AIMP1/p43, AIMP2/p38 and EEF1E1/p18. Interacts with RARS1. Part of a complex composed of RARS1, QARS1 and AIMP1.

The protein resides in the cytoplasm. Its subcellular location is the cytosol. It carries out the reaction tRNA(Gln) + L-glutamine + ATP = L-glutaminyl-tRNA(Gln) + AMP + diphosphate. Its function is as follows. Glutamine--tRNA ligase. Plays a critical role in brain development. The protein is Glutamine--tRNA ligase (QARS1) of Bos taurus (Bovine).